A 295-amino-acid chain; its full sequence is Probable aspartoacylase (295 aa).

The Zn(2+) site is built by histidine 16 and glutamate 19. Residues arginine 58 and 65-66 each bind substrate; that span reads NR. Histidine 107 is a binding site for Zn(2+). 2 residues coordinate substrate: glutamate 166 and tyrosine 277.

Belongs to the AspA/AstE family. Aspartoacylase subfamily. Zn(2+) is required as a cofactor.

The catalysed reaction is an N-acyl-L-aspartate + H2O = a carboxylate + L-aspartate. This chain is Probable aspartoacylase, found in Acaryochloris marina (strain MBIC 11017).